Consider the following 248-residue polypeptide: Ubiquinone biosynthesis O-methyltransferase (248 aa).

4 residues coordinate S-adenosyl-L-methionine: Arg-41, Gly-72, Asp-93, and Met-136.

Belongs to the methyltransferase superfamily. UbiG/COQ3 family.

The enzyme catalyses a 3-demethylubiquinol + S-adenosyl-L-methionine = a ubiquinol + S-adenosyl-L-homocysteine + H(+). It carries out the reaction a 3-(all-trans-polyprenyl)benzene-1,2-diol + S-adenosyl-L-methionine = a 2-methoxy-6-(all-trans-polyprenyl)phenol + S-adenosyl-L-homocysteine + H(+). Its pathway is cofactor biosynthesis; ubiquinone biosynthesis. O-methyltransferase that catalyzes the 2 O-methylation steps in the ubiquinone biosynthetic pathway. In Rhizobium etli (strain ATCC 51251 / DSM 11541 / JCM 21823 / NBRC 15573 / CFN 42), this protein is Ubiquinone biosynthesis O-methyltransferase.